The following is a 534-amino-acid chain: O-phosphoserine--tRNA(Cys) ligase (534 aa).

Substrate-binding positions include 186 to 188 (HMT), 231 to 233 (SAS), 273 to 274 (YY), and N325.

The protein belongs to the class-II aminoacyl-tRNA synthetase family. O-phosphoseryl-tRNA(Cys) synthetase subfamily. As to quaternary structure, homotetramer. Interacts with SepCysS.

The catalysed reaction is tRNA(Cys) + O-phospho-L-serine + ATP = O-phospho-L-seryl-tRNA(Cys) + AMP + diphosphate. Its function is as follows. Catalyzes the attachment of O-phosphoserine (Sep) to tRNA(Cys). The protein is O-phosphoserine--tRNA(Cys) ligase (sepS) of Archaeoglobus fulgidus (strain ATCC 49558 / DSM 4304 / JCM 9628 / NBRC 100126 / VC-16).